The chain runs to 356 residues: Histidinol-phosphate aminotransferase 1 (356 aa).

Lysine 217 bears the N6-(pyridoxal phosphate)lysine mark.

Belongs to the class-II pyridoxal-phosphate-dependent aminotransferase family. Histidinol-phosphate aminotransferase subfamily. In terms of assembly, homodimer. It depends on pyridoxal 5'-phosphate as a cofactor.

The catalysed reaction is L-histidinol phosphate + 2-oxoglutarate = 3-(imidazol-4-yl)-2-oxopropyl phosphate + L-glutamate. The protein operates within amino-acid biosynthesis; L-histidine biosynthesis; L-histidine from 5-phospho-alpha-D-ribose 1-diphosphate: step 7/9. This chain is Histidinol-phosphate aminotransferase 1, found in Burkholderia mallei (strain ATCC 23344).